Reading from the N-terminus, the 149-residue chain is Protein FAM72B (149 aa).

The protein belongs to the FAM72 family.

This chain is Protein FAM72B (FAM72B), found in Homo sapiens (Human).